A 352-amino-acid polypeptide reads, in one-letter code: Enhancer of mRNA-decapping protein 1 (352 aa).

Disordered stretches follow at residues Met1–His258 and Gln277–Ser352. A compositionally biased stretch (low complexity) spans His71 to Lys80. Polar residues-rich tracts occupy residues Asn93–Gly104 and Thr205–Val225. Residues Gly289–Gln309 are compositionally biased toward low complexity.

The protein belongs to the EDC family.

The protein localises to the cytoplasm. MRNA-binding protein which stimulates mRNA decapping. The chain is Enhancer of mRNA-decapping protein 1 (EDC1) from Debaryomyces hansenii (strain ATCC 36239 / CBS 767 / BCRC 21394 / JCM 1990 / NBRC 0083 / IGC 2968) (Yeast).